Here is a 496-residue protein sequence, read N- to C-terminus: Probable cytosol aminopeptidase (496 aa).

Residues K266 and D271 each coordinate Mn(2+). The active site involves K278. 3 residues coordinate Mn(2+): D289, D348, and E350. Residue R352 is part of the active site.

The protein belongs to the peptidase M17 family. Mn(2+) serves as cofactor.

Its subcellular location is the cytoplasm. The enzyme catalyses Release of an N-terminal amino acid, Xaa-|-Yaa-, in which Xaa is preferably Leu, but may be other amino acids including Pro although not Arg or Lys, and Yaa may be Pro. Amino acid amides and methyl esters are also readily hydrolyzed, but rates on arylamides are exceedingly low.. The catalysed reaction is Release of an N-terminal amino acid, preferentially leucine, but not glutamic or aspartic acids.. Its function is as follows. Presumably involved in the processing and regular turnover of intracellular proteins. Catalyzes the removal of unsubstituted N-terminal amino acids from various peptides. The sequence is that of Probable cytosol aminopeptidase from Stutzerimonas stutzeri (strain A1501) (Pseudomonas stutzeri).